The sequence spans 126 residues: Large-conductance mechanosensitive channel (126 aa).

Helical transmembrane passes span valine 14–leucine 34, methionine 40–valine 60, and glycine 67–isoleucine 87.

This sequence belongs to the MscL family. In terms of assembly, homopentamer.

The protein localises to the cell membrane. Its function is as follows. Channel that opens in response to stretch forces in the membrane lipid bilayer. May participate in the regulation of osmotic pressure changes within the cell. The chain is Large-conductance mechanosensitive channel from Bacillus licheniformis (strain ATCC 14580 / DSM 13 / JCM 2505 / CCUG 7422 / NBRC 12200 / NCIMB 9375 / NCTC 10341 / NRRL NRS-1264 / Gibson 46).